The following is a 146-amino-acid chain: VFIEFCVEDSKDVNVNFEKSKLTFSCLGGSDNFKHLNEIDLFNNIDPNESKHKRTDRSILCCLRKGESGQAWPRLTKERAKLNWLSVDFNNWKDWEDDSDEDMSNFDRFSEMMNNMGGDDDVDLPEVDGADDDSPDSDDEKMPDLE.

The CS domain maps to 1–76; that stretch reads VFIEFCVEDS…ESGQAWPRLT (76 aa). A disordered region spans residues 110–146; the sequence is SEMMNNMGGDDDVDLPEVDGADDDSPDSDDEKMPDLE. Residues 118-139 show a composition bias toward acidic residues; that stretch reads GDDDVDLPEVDGADDDSPDSDD.

This sequence belongs to the p23/wos2 family. Binds to telomerase. Binds to the progesterone receptor.

It localises to the cytoplasm. The enzyme catalyses prostaglandin H2 = prostaglandin E2. Its pathway is lipid metabolism; prostaglandin biosynthesis. Functionally, molecular chaperone. This is Prostaglandin E synthase 3 (PTGES3) from Gallus gallus (Chicken).